Reading from the N-terminus, the 258-residue chain is Putative cysteine-rich repeat secretory protein 35 (258 aa).

Positions 1–29 are cleaved as a signal peptide; it reads MYSSYSLSKRLIYVPILAIQFLLVRSVSS. 2 consecutive Gnk2-homologous domains span residues 36–138 and 146–255; these read YLNH…TIKP and FKNT…LYPF.

Belongs to the cysteine-rich repeat secretory protein family.

The protein localises to the secreted. The protein is Putative cysteine-rich repeat secretory protein 35 (CRRSP35) of Arabidopsis thaliana (Mouse-ear cress).